The primary structure comprises 543 residues: Steroid receptor seven-up, isoforms B/C (543 aa).

Residues 38–191 (PPHSAWHEPP…HSQSSNSGSQ (154 aa)) form a disordered region. A compositionally biased stretch (low complexity) spans 56-68 (AASAGPGTTTGSV). The segment covering 83-101 (QQSAVIKQDLSCPSLNQAG) has biased composition (polar residues). Residues 122–141 (GSAGGHHSGSGSGSGSGVNP) show a composition bias toward gly residues. The segment covering 158-170 (MLTSIKGQPTGCG) has biased composition (polar residues). Residues 171–191 (STTPSSQANSSHSQSSNSGSQ) are compositionally biased toward low complexity. The segment at residues 197 to 272 (NIECVVCGDK…MGMRREAVQR (76 aa)) is a DNA-binding region (nuclear receptor). NR C4-type zinc fingers lie at residues 200 to 220 (CVVC…CEGC) and 236 to 260 (CRGS…LKKC). An NR LBD domain is found at 307 to 532 (YLSSYISLLL…TLIRDMLLSG (226 aa)).

Belongs to the nuclear hormone receptor family. NR2 subfamily. As to expression, expressed in several embryonic tissues; dorsal vessel, oenocyte and fat body. CNS expression is dynamic and confined to temporally restricted subsections of the NB lineage; expressed in many NB and GMCs, but only a small number of neurons.

The protein resides in the nucleus. Receptor that is required in photoreceptors R1, R3, R4 and R6 during eye development; generation of the ganglion mother cell-2 (GMC-2) fate in the nb7-3 lineage, coinciding with the transition in the expression of HB to KR in the neuroblasts (NBs). This chain is Steroid receptor seven-up, isoforms B/C (svp), found in Drosophila melanogaster (Fruit fly).